Reading from the N-terminus, the 469-residue chain is Protein RdxA (469 aa).

Residues 1–23 are Cytoplasmic-facing; that stretch reads MSEPLYAPRTPIFPRQISGAFRT. The chain crosses the membrane as a helical span at residues 24–44; that stretch reads AKWWILAVSLGIYLLTPWLRW. Residues 45–75 are Periplasmic-facing; the sequence is DRGPNLPDQAVLIDIAGRRFFLFGIQIWPHE. Residues 76–96 form a helical membrane-spanning segment; it reads FYFVAGLLIMAGLGLFLFTSA. Residues 97-149 are Cytoplasmic-facing; that stretch reads AGRVWCGYACPQTVWTDLFLLVERRIEGDRNAQIRLHRQAWTAEKVWKRLLKW. Residues 150-170 traverse the membrane as a helical segment; sequence SVWAAISLLTGGAWVFYFADA. The Periplasmic portion of the chain corresponds to 171–183; it reads PTLLNGLVTLTAH. A helical membrane pass occupies residues 184–204; sequence PVAWITIFVLTATTFVFAGFM. The Cytoplasmic segment spans residues 205-327; the sequence is REQICIYACP…PAWRRLFRLR (123 aa). 2 consecutive 4Fe-4S ferredoxin-type domains span residues 242–270 and 266–295; these read KRSE…IREG and DIRE…IGRP. Residues Cys-251, Cys-254, Cys-257, Cys-261, Cys-275, Cys-278, Cys-281, and Cys-285 each contribute to the [4Fe-4S] cluster site. A helical membrane pass occupies residues 328–348; it reads TSLYAVLWAGVGVTLIAALLL. Topologically, residues 349-469 are periplasmic; the sequence is RPAVDLAVTP…VKAAFHGARS (121 aa).

It is found in the cell membrane. In terms of biological role, predicted to be involved in a redox process. This Cereibacter sphaeroides (strain ATCC 17023 / DSM 158 / JCM 6121 / CCUG 31486 / LMG 2827 / NBRC 12203 / NCIMB 8253 / ATH 2.4.1.) (Rhodobacter sphaeroides) protein is Protein RdxA (rdxA).